Consider the following 735-residue polypeptide: Glutamine-dependent NAD(+) synthetase (735 aa).

The CN hydrolase domain occupies Leu-4–Leu-274. The active-site Proton acceptor; for glutaminase activity is the Glu-44. The active-site For glutaminase activity is Lys-113. Cys-174 acts as the Nucleophile; for glutaminase activity in catalysis. The ligase stretch occupies residues Tyr-324 to Lys-711. Position 354-361 (Pro-354–Ser-361) interacts with ATP. Residue Ser-356 is part of the active site.

In the C-terminal section; belongs to the NAD synthetase family.

It carries out the reaction deamido-NAD(+) + L-glutamine + ATP + H2O = L-glutamate + AMP + diphosphate + NAD(+) + H(+). Its pathway is cofactor biosynthesis; NAD(+) biosynthesis; NAD(+) from deamido-NAD(+) (L-Gln route): step 1/1. This chain is Glutamine-dependent NAD(+) synthetase, found in Oryza sativa subsp. indica (Rice).